Reading from the N-terminus, the 241-residue chain is Pyridoxine 5'-phosphate synthase (241 aa).

Position 7 (asparagine 7) interacts with 3-amino-2-oxopropyl phosphate. Residue 9–10 (DH) participates in 1-deoxy-D-xylulose 5-phosphate binding. Arginine 18 is a binding site for 3-amino-2-oxopropyl phosphate. The active-site Proton acceptor is histidine 43. Residues arginine 45 and histidine 50 each coordinate 1-deoxy-D-xylulose 5-phosphate. Catalysis depends on glutamate 70, which acts as the Proton acceptor. A 1-deoxy-D-xylulose 5-phosphate-binding site is contributed by threonine 100. The active-site Proton donor is histidine 191. Residues glycine 192 and 213-214 (GH) contribute to the 3-amino-2-oxopropyl phosphate site.

It belongs to the PNP synthase family. In terms of assembly, homooctamer; tetramer of dimers.

The protein resides in the cytoplasm. It carries out the reaction 3-amino-2-oxopropyl phosphate + 1-deoxy-D-xylulose 5-phosphate = pyridoxine 5'-phosphate + phosphate + 2 H2O + H(+). The protein operates within cofactor biosynthesis; pyridoxine 5'-phosphate biosynthesis; pyridoxine 5'-phosphate from D-erythrose 4-phosphate: step 5/5. Functionally, catalyzes the complicated ring closure reaction between the two acyclic compounds 1-deoxy-D-xylulose-5-phosphate (DXP) and 3-amino-2-oxopropyl phosphate (1-amino-acetone-3-phosphate or AAP) to form pyridoxine 5'-phosphate (PNP) and inorganic phosphate. In Nitratidesulfovibrio vulgaris (strain ATCC 29579 / DSM 644 / CCUG 34227 / NCIMB 8303 / VKM B-1760 / Hildenborough) (Desulfovibrio vulgaris), this protein is Pyridoxine 5'-phosphate synthase.